The primary structure comprises 321 residues: Lipoyl synthase (321 aa).

[4Fe-4S] cluster contacts are provided by Cys68, Cys73, Cys79, Cys94, Cys98, Cys101, and Ser308. Residues 80–297 form the Radical SAM core domain; sequence FNHGTATFMI…KAEALAMGFT (218 aa).

It belongs to the radical SAM superfamily. Lipoyl synthase family. [4Fe-4S] cluster is required as a cofactor.

The protein resides in the cytoplasm. It carries out the reaction [[Fe-S] cluster scaffold protein carrying a second [4Fe-4S](2+) cluster] + N(6)-octanoyl-L-lysyl-[protein] + 2 oxidized [2Fe-2S]-[ferredoxin] + 2 S-adenosyl-L-methionine + 4 H(+) = [[Fe-S] cluster scaffold protein] + N(6)-[(R)-dihydrolipoyl]-L-lysyl-[protein] + 4 Fe(3+) + 2 hydrogen sulfide + 2 5'-deoxyadenosine + 2 L-methionine + 2 reduced [2Fe-2S]-[ferredoxin]. Its pathway is protein modification; protein lipoylation via endogenous pathway; protein N(6)-(lipoyl)lysine from octanoyl-[acyl-carrier-protein]: step 2/2. Catalyzes the radical-mediated insertion of two sulfur atoms into the C-6 and C-8 positions of the octanoyl moiety bound to the lipoyl domains of lipoate-dependent enzymes, thereby converting the octanoylated domains into lipoylated derivatives. The protein is Lipoyl synthase of Salmonella arizonae (strain ATCC BAA-731 / CDC346-86 / RSK2980).